Here is a 193-residue protein sequence, read N- to C-terminus: Holliday junction branch migration complex subunit RuvA (193 aa).

The tract at residues 1 to 63 (MYAYLKGKIM…EDAQLLYGFK (63 aa)) is domain I. The segment at 64 to 141 (DEEEKAMFNA…TITDESELFK (78 aa)) is domain II. A flexible linker region spans residues 141–142 (KE). A domain III region spans residues 143 to 193 (VNDTLLNEALLAFEALGYSKREITKIEKELKKKQFSTVDEYVKQGLQMFVS).

This sequence belongs to the RuvA family. As to quaternary structure, homotetramer. Forms an RuvA(8)-RuvB(12)-Holliday junction (HJ) complex. HJ DNA is sandwiched between 2 RuvA tetramers; dsDNA enters through RuvA and exits via RuvB. An RuvB hexamer assembles on each DNA strand where it exits the tetramer. Each RuvB hexamer is contacted by two RuvA subunits (via domain III) on 2 adjacent RuvB subunits; this complex drives branch migration. In the full resolvosome a probable DNA-RuvA(4)-RuvB(12)-RuvC(2) complex forms which resolves the HJ.

It is found in the cytoplasm. Functionally, the RuvA-RuvB-RuvC complex processes Holliday junction (HJ) DNA during genetic recombination and DNA repair, while the RuvA-RuvB complex plays an important role in the rescue of blocked DNA replication forks via replication fork reversal (RFR). RuvA specifically binds to HJ cruciform DNA, conferring on it an open structure. The RuvB hexamer acts as an ATP-dependent pump, pulling dsDNA into and through the RuvAB complex. HJ branch migration allows RuvC to scan DNA until it finds its consensus sequence, where it cleaves and resolves the cruciform DNA. This chain is Holliday junction branch migration complex subunit RuvA, found in Macrococcus caseolyticus (strain JCSC5402) (Macrococcoides caseolyticum).